The primary structure comprises 361 residues: MTPQPLADNLSPPDPARLAQSIKDWGRELGFQQVGISDVELGEHEAHLQRWLEAGYHGEMDYMAAHGSKRSRPAELVPGTLRVISLRMDYLPGDTRMAQVLATPEKAYVSRYALGRDYHKLIRKRLQQLAERIQAEVGPFGFRAFVDSAPVLEKAIAEQAGLGWIGKNTLVLNRKAGSYFFLGELFVDMPLPVDPAMDSEHCGRCSACLDICPTAAFVGPYRLDARRCISYLTIEYKGAIPLELRPLIGNRVFGCDDCQIVCPWNRFARPTGQGDFQPRHSLDNAELAELFLWSEEEFLGRTEGSPLRRAGYERWLRNLAVGLGNAPSTIPVLEALKARRGFPSELVREHVEWALRRHGET.

The active-site Proton donor is D147. The region spanning 193–222 (VDPAMDSEHCGRCSACLDICPTAAFVGPYR) is the 4Fe-4S ferredoxin-type domain. C202, C205, C208, C212, C228, C255, C258, and C262 together coordinate [4Fe-4S] cluster.

Belongs to the QueG family. As to quaternary structure, monomer. Cob(II)alamin is required as a cofactor. [4Fe-4S] cluster serves as cofactor.

Its subcellular location is the cytoplasm. It catalyses the reaction epoxyqueuosine(34) in tRNA + AH2 = queuosine(34) in tRNA + A + H2O. Its pathway is tRNA modification; tRNA-queuosine biosynthesis. In terms of biological role, catalyzes the conversion of epoxyqueuosine (oQ) to queuosine (Q), which is a hypermodified base found in the wobble positions of tRNA(Asp), tRNA(Asn), tRNA(His) and tRNA(Tyr). The sequence is that of Epoxyqueuosine reductase from Pseudomonas aeruginosa (strain ATCC 15692 / DSM 22644 / CIP 104116 / JCM 14847 / LMG 12228 / 1C / PRS 101 / PAO1).